A 463-amino-acid polypeptide reads, in one-letter code: L-seryl-tRNA(Sec) selenium transferase (463 aa).

The residue at position 295 (K295) is an N6-(pyridoxal phosphate)lysine.

The protein belongs to the SelA family. In terms of assembly, homodecamer; pentamer of dimers. Binds only one seryl-tRNA(Sec) per dimer. The cofactor is pyridoxal 5'-phosphate.

It is found in the cytoplasm. It catalyses the reaction L-seryl-tRNA(Sec) + selenophosphate + H(+) = L-selenocysteinyl-tRNA(Sec) + phosphate. It functions in the pathway aminoacyl-tRNA biosynthesis; selenocysteinyl-tRNA(Sec) biosynthesis; selenocysteinyl-tRNA(Sec) from L-seryl-tRNA(Sec) (bacterial route): step 1/1. In terms of biological role, converts seryl-tRNA(Sec) to selenocysteinyl-tRNA(Sec) required for selenoprotein biosynthesis. In Shigella boydii serotype 18 (strain CDC 3083-94 / BS512), this protein is L-seryl-tRNA(Sec) selenium transferase.